The sequence spans 273 residues: MAIVKCKPTSAGRRHVVKVVNAELHKGKPYAPLLDTKSKTGGRNNLGRITTRHIGGGHKQHYRLIDFKRNKFDIPAVVERLEYDPNRSANIALVLYKDGERRYILAPKGLSVGDMIQAGASAPIKVGNALPMRNIPVGTTVHNVELKPGKGGQIARSAGAYVQIIAREGNYVTLRLRSGEMRKVLAECIATIGEVGNSEHMLRVLGKAGANRWRGIRPTVRGTAMNPVDHPHGGGEGRNFGKHPVTPWGVQTKGKKTRHNKRTDKYIVRRRGK.

Residues 221-262 (RGTAMNPVDHPHGGGEGRNFGKHPVTPWGVQTKGKKTRHNKR) form a disordered region. The span at 253–262 (KGKKTRHNKR) shows a compositional bias: basic residues.

This sequence belongs to the universal ribosomal protein uL2 family. As to quaternary structure, part of the 50S ribosomal subunit. Forms a bridge to the 30S subunit in the 70S ribosome.

Its function is as follows. One of the primary rRNA binding proteins. Required for association of the 30S and 50S subunits to form the 70S ribosome, for tRNA binding and peptide bond formation. It has been suggested to have peptidyltransferase activity; this is somewhat controversial. Makes several contacts with the 16S rRNA in the 70S ribosome. The sequence is that of Large ribosomal subunit protein uL2 from Haemophilus ducreyi (strain 35000HP / ATCC 700724).